Reading from the N-terminus, the 225-residue chain is Holliday junction branch migration complex subunit RuvA (225 aa).

The segment at 1–71 (MISWINGELV…EDSDLLFGFT (71 aa)) is domain I. The segment at 72 to 150 (SKDQKFFFIE…SKIQIEEEKG (79 aa)) is domain II. The interval 151 to 161 (QEEFEITNPEI) is flexible linker. The tract at residues 161–225 (IYKLMEDLQL…LDQGNSNLAR (65 aa)) is domain III.

Belongs to the RuvA family. Homotetramer. Forms an RuvA(8)-RuvB(12)-Holliday junction (HJ) complex. HJ DNA is sandwiched between 2 RuvA tetramers; dsDNA enters through RuvA and exits via RuvB. An RuvB hexamer assembles on each DNA strand where it exits the tetramer. Each RuvB hexamer is contacted by two RuvA subunits (via domain III) on 2 adjacent RuvB subunits; this complex drives branch migration. In the full resolvosome a probable DNA-RuvA(4)-RuvB(12)-RuvC(2) complex forms which resolves the HJ.

It is found in the cytoplasm. The RuvA-RuvB-RuvC complex processes Holliday junction (HJ) DNA during genetic recombination and DNA repair, while the RuvA-RuvB complex plays an important role in the rescue of blocked DNA replication forks via replication fork reversal (RFR). RuvA specifically binds to HJ cruciform DNA, conferring on it an open structure. The RuvB hexamer acts as an ATP-dependent pump, pulling dsDNA into and through the RuvAB complex. HJ branch migration allows RuvC to scan DNA until it finds its consensus sequence, where it cleaves and resolves the cruciform DNA. This Prochlorococcus marinus (strain MIT 9215) protein is Holliday junction branch migration complex subunit RuvA.